Consider the following 212-residue polypeptide: Protein YIPF5 homolog (212 aa).

Residues 1-79 are Cytoplasmic-facing; the sequence is MNNNNSFNFI…KKIDSHIMDD (79 aa). The helical transmembrane segment at 80-100 threads the bilayer; it reads TDLGGPILFGLLLGFSLLMSG. A topological domain (lumenal) is located at residue K101. Residues 102-122 traverse the membrane as a helical segment; sequence IQFGYIYGLGLIGCVSMYIVL. At 123-128 the chain is on the cytoplasmic side; that stretch reads NLMSEK. Residues 129 to 149 form a helical membrane-spanning segment; sequence GIDIYRVISVLGYCLLPMIFL. Topologically, residues 150–163 are lumenal; that stretch reads SFTSLIININGMVG. The chain crosses the membrane as a helical span at residues 164–186; sequence YILIGFAIVWSTYSASKMFVKVL. Topologically, residues 187–191 are cytoplasmic; the sequence is SMIDQ. The chain crosses the membrane as a helical span at residues 192-212; sequence RILVAYPVGLLYTGFALITAF.

Belongs to the YIP1 family.

The protein resides in the endoplasmic reticulum membrane. It is found in the golgi apparatus. The protein localises to the cis-Golgi network membrane. Its function is as follows. Plays a role in transport between endoplasmic reticulum and Golgi. The polypeptide is Protein YIPF5 homolog (yipf5) (Dictyostelium discoideum (Social amoeba)).